The sequence spans 607 residues: Glutamine--fructose-6-phosphate aminotransferase [isomerizing] (607 aa).

Cys2 functions as the Nucleophile; for GATase activity in the catalytic mechanism. The Glutamine amidotransferase type-2 domain maps to 2–217 (CGIIGIIGRE…EGDWVVLTRE (216 aa)). 2 SIS domains span residues 283–422 (PDFD…VKGQ) and 455–597 (VATA…VDQP). Lys602 acts as the For Fru-6P isomerization activity in catalysis.

As to quaternary structure, homodimer.

It localises to the cytoplasm. The enzyme catalyses D-fructose 6-phosphate + L-glutamine = D-glucosamine 6-phosphate + L-glutamate. Functionally, catalyzes the first step in hexosamine metabolism, converting fructose-6P into glucosamine-6P using glutamine as a nitrogen source. This chain is Glutamine--fructose-6-phosphate aminotransferase [isomerizing], found in Zymomonas mobilis subsp. mobilis (strain ATCC 31821 / ZM4 / CP4).